We begin with the raw amino-acid sequence, 95 residues long: Protein TusB (95 aa).

It belongs to the DsrH/TusB family. In terms of assembly, heterohexamer, formed by a dimer of trimers. The hexameric TusBCD complex contains 2 copies each of TusB, TusC and TusD. The TusBCD complex interacts with TusE.

It is found in the cytoplasm. Part of a sulfur-relay system required for 2-thiolation of 5-methylaminomethyl-2-thiouridine (mnm(5)s(2)U) at tRNA wobble positions. This Escherichia coli O45:K1 (strain S88 / ExPEC) protein is Protein TusB.